The sequence spans 612 residues: Adherence factor (612 aa).

Low complexity-rich tracts occupy residues 1–18 (MSSFNSNSNPANAQNLSS), 47–68 (SSMMQQSQQGQPQSQTSQQQQQ), 94–106 (LQTQQPSSSSATT), 115–141 (YNQQQSQQQQQQQQQYQQMQPQPNNMQ), 182–203 (QSAQPISHSQPQPQPQATQPRS), and 218–228 (SRQVSGSGRST). Disordered regions lie at residues 1 to 20 (MSSFNSNSNPANAQNLSSFQ), 46 to 68 (ASSMMQQSQQGQPQSQTSQQQQQ), 94 to 143 (LQTQ…MQFF), 179 to 273 (PQLQ…NNNK), 443 to 480 (KEKKLTEKTIEQREQQRKKRASANHSPPDSDSITNTNN), 497 to 527 (SQLMPNQNTGSGATKISSTTPPPPSQALSNN), and 546 to 612 (SQEQ…KQFY). Over residues 230–240 (AKKQSAITSGS) the composition is skewed to polar residues. The segment covering 254–272 (TSVANSTSTTTMTTTNNNN) has biased composition (low complexity). Positions 443–457 (KEKKLTEKTIEQREQ) are enriched in basic and acidic residues. Polar residues-rich tracts occupy residues 465-480 (ANHSPPDSDSITNTNN) and 497-512 (SQLMPNQNTGSGATKI). Basic residues predominate over residues 555–571 (NQHHHNHQQHPLIHHHQ). Low complexity predominate over residues 585–606 (PSTIPTSSLSIQQQQQQQQQQL).

Its function is as follows. Surface antigen mediating adhesion and aggregation in S.cerevisiae. This Candida albicans (strain SC5314 / ATCC MYA-2876) (Yeast) protein is Adherence factor (ADF1).